The sequence spans 407 residues: uncharacterized protein (407 aa).

2 disordered regions span residues 73–93 (SPHS…VHGG) and 116–202 (SGSI…IKPS). Repeat copies occupy residues 112 to 116 (GSIRS), 117 to 121 (GSIRS), 122 to 126 (GSIRN), 127 to 131 (GSIRS), and 132 to 136 (GSVRD). A 5 X 5 AA tandem repeats of G-[S]-[IV]-R-[DNS] region spans residues 112-136 (GSIRSGSIRSGSIRNGSIRSGSVRD). Residues 116–132 (SGSIRSGSIRNGSIRSG) are compositionally biased toward low complexity. Positions 187–202 (NHYAESEYSEKSIKPS) are enriched in basic and acidic residues.

The protein belongs to the asfivirus B407L family.

This is an uncharacterized protein from Ornithodoros (relapsing fever ticks).